A 723-amino-acid chain; its full sequence is Pentatricopeptide repeat-containing protein At5g50280, chloroplastic (723 aa).

The N-terminal 44 residues, M1–S44, are a transit peptide targeting the chloroplast. Positions I70 to T97 are disordered. A compositionally biased stretch (acidic residues) spans E81–T97. 11 PPR repeats span residues D272 to P306, D307 to W342, S343 to S377, N378 to P412, S413 to P447, N448 to P483, S484 to P518, S519 to G553, T554 to P588, S589 to P623, and D624 to P658. Residues T700 to S723 form a disordered region. Positions N713 to S723 are enriched in polar residues.

It belongs to the PPR family. P subfamily.

The protein localises to the plastid. Its subcellular location is the chloroplast. This Arabidopsis thaliana (Mouse-ear cress) protein is Pentatricopeptide repeat-containing protein At5g50280, chloroplastic (EMB1006).